We begin with the raw amino-acid sequence, 404 residues long: Zinc finger CCCH domain-containing protein 3 (404 aa).

5 consecutive C3H1-type zinc fingers follow at residues 47-75, 90-118, 135-163, 261-289, and 307-335; these read RPGE…HPTH, RIGQ…HPKD, RLGE…HPQP, SSDQ…HPGV, and RPGQ…HPML. Residues 350–374 show a composition bias toward polar residues; it reads FASPVTTHQRISPTPNRSDSKSLSN. The disordered stretch occupies residues 350–404; the sequence is FASPVTTHQRISPTPNRSDSKSLSNGKPDVKKESSETEKPDNGEVQDLSEDASSP. Residues 377-391 show a composition bias toward basic and acidic residues; the sequence is PDVKKESSETEKPDN.

The protein resides in the nucleus. In terms of biological role, possesses RNA-binding and ribonuclease activities in vitro. This Arabidopsis thaliana (Mouse-ear cress) protein is Zinc finger CCCH domain-containing protein 3.